The chain runs to 391 residues: Lipid-A-disaccharide synthase (391 aa).

Belongs to the LpxB family.

It catalyses the reaction a lipid X + a UDP-2-N,3-O-bis[(3R)-3-hydroxyacyl]-alpha-D-glucosamine = a lipid A disaccharide + UDP + H(+). It functions in the pathway bacterial outer membrane biogenesis; LPS lipid A biosynthesis. Its function is as follows. Condensation of UDP-2,3-diacylglucosamine and 2,3-diacylglucosamine-1-phosphate to form lipid A disaccharide, a precursor of lipid A, a phosphorylated glycolipid that anchors the lipopolysaccharide to the outer membrane of the cell. The polypeptide is Lipid-A-disaccharide synthase (Rickettsia akari (strain Hartford)).